The following is a 537-amino-acid chain: Carboxypeptidase Y homolog A (537 aa).

The first 17 residues, Met1–Val17, serve as a signal peptide directing secretion. Residues Ala18–Lys124 constitute a propeptide that is removed on maturation. 5 cysteine pairs are disulfide-bonded: Cys178–Cys418, Cys312–Cys326, Cys336–Cys359, Cys343–Cys352, and Cys381–Cys388. Asn209 is a glycosylation site (N-linked (GlcNAc...) asparagine). Ser265 is a catalytic residue. Asp457 is an active-site residue. The N-linked (GlcNAc...) asparagine glycan is linked to Asn503. His514 is a catalytic residue.

The protein belongs to the peptidase S10 family.

Its subcellular location is the vacuole. The enzyme catalyses Release of a C-terminal amino acid with broad specificity.. Vacuolar carboxypeptidase involved in degradation of small peptides. Digests preferentially peptides containing an aliphatic or hydrophobic residue in P1' position, as well as methionine, leucine or phenylalanine in P1 position of ester substrate. This Fusarium vanettenii (strain ATCC MYA-4622 / CBS 123669 / FGSC 9596 / NRRL 45880 / 77-13-4) (Fusarium solani subsp. pisi) protein is Carboxypeptidase Y homolog A (CPYA).